Reading from the N-terminus, the 466-residue chain is Vimentin (466 aa).

Low complexity-rich tracts occupy residues 1–13 (MSTR…SYRR) and 20–33 (TSSR…YVTT). A disordered region spans residues 1–33 (MSTRSVSSSSYRRMFGGSGTSSRPSSNRSYVTT). At S2 the chain carries N-acetylserine. The interval 2–95 (STRSVSSSSY…FSLADAINTE (94 aa)) is head. At S5 the chain carries Phosphoserine. Phosphoserine; by PKA and PKC; alternate is present on S7. S7 carries O-linked (GlcNAc) serine; alternate glycosylation. Residue S8 is modified to Phosphoserine. Phosphoserine; by PKC is present on residues S9 and S10. T20 carries the post-translational modification Phosphothreonine. S21 bears the Phosphoserine; by PKC mark. The residue at position 25 (S25) is a Phosphoserine; by PKA and PKC. S26 is subject to Phosphoserine; by PKC. O-linked (GlcNAc) threonine glycosylation occurs at T33. S34 carries O-linked (GlcNAc) serine; alternate glycosylation. At S34 the chain carries Phosphoserine; by PKC; alternate. At S39 the chain carries Phosphoserine; by CaMK2, PKA, PKC and ROCK2. S42 bears the Phosphoserine; by PKC mark. S47 bears the Phosphoserine; by PKA mark. S49 carries the phosphoserine modification. Position 51 is a phosphoserine; by PKA and PKC (S51). At Y53 the chain carries Phosphotyrosine. A phosphoserine mark is found at S55 and S56. The residue at position 61 (Y61) is a Phosphotyrosine. Residue S66 is modified to Phosphoserine; by PKA and PKC. Position 72 is a phosphoserine; by AURKB and ROCK2 (S72). S73 carries the phosphoserine modification. At S83 the chain carries Phosphoserine; by CaMK2. S87 carries the post-translational modification Phosphoserine. Residues 96–131 (FKNTRTNEKVELQELNDRFANYIDKVRFLEQQNKIL) are coil 1A. Residues 96–131 (FKNTRTNEKVELQELNDRFANYIDKVRFLEQQNKIL) adopt a coiled-coil conformation. Residues 103 to 411 (EKVELQELND…KLLEGEESRI (309 aa)) form the IF rod domain. A Glycyl lysine isopeptide (Lys-Gly) (interchain with G-Cter in SUMO2) cross-link involves residue K104. Y117 is modified (phosphotyrosine). N6-acetyllysine; alternate occurs at positions 120, 129, and 139. K120 and K129 each carry N6-succinyllysine; alternate. Glycyl lysine isopeptide (Lys-Gly) (interchain with G-Cter in SUMO2); alternate cross-links involve residues K120, K129, and K139. Residues 132–153 (LAELEQLKGQGKSRLGDLYEEE) form a linker 1 region. A Phosphoserine modification is found at S144. Residues 154 to 245 (MRELRRQVDQ…KLHDEEIQEL (92 aa)) are a coiled coil. Residues 154–245 (MRELRRQVDQ…KLHDEEIQEL (92 aa)) form a coil 1B region. At K168 the chain carries N6-acetyllysine. Residue K188 is modified to N6-acetyllysine; alternate. The residue at position 188 (K188) is an N6-succinyllysine; alternate. A Phosphoserine modification is found at S214. At K223 the chain carries N6-acetyllysine; alternate. K223 participates in a covalent cross-link: Glycyl lysine isopeptide (Lys-Gly) (interchain with G-Cter in SUMO2); alternate. S226 is modified (phosphoserine). N6-acetyllysine is present on K235. Residues 246-268 (QAQIQEQHVQIDVDVSKPDLTAA) are linker 12. K262 participates in a covalent cross-link: Glycyl lysine isopeptide (Lys-Gly) (interchain with G-Cter in SUMO2). Residues 269-407 (LRDVRQQYES…ATYRKLLEGE (139 aa)) form a coil 2 region. Residue K294 is modified to N6-acetyllysine; alternate. K294 bears the N6-succinyllysine; alternate mark. K294 is covalently cross-linked (Glycyl lysine isopeptide (Lys-Gly) (interchain with G-Cter in SUMO2); alternate). S299 carries the phosphoserine modification. Positions 303–407 (NRNNDALRQA…ATYRKLLEGE (105 aa)) form a coiled coil. K313 is covalently cross-linked (Glycyl lysine isopeptide (Lys-Gly) (interchain with G-Cter in SUMO2)). S325 bears the Phosphoserine mark. Residues 326–329 (LTCE) carry the [IL]-x-C-x-x-[DE] motif motif. K373 is modified (N6-acetyllysine; alternate). K373 is covalently cross-linked (Glycyl lysine isopeptide (Lys-Gly) (interchain with G-Cter in SUMO2); alternate). The tail stretch occupies residues 408–466 (ESRISLPLPTFSSLNLRETNLESLPLVDTHSKRTLLIKTVETRDGQVINETSQHHDDLE). S409, S412, S419, and S420 each carry phosphoserine. A Phosphothreonine modification is found at T426. S430 is subject to Phosphoserine. The residue at position 436 (T436) is a Phosphothreonine. S438 is subject to Phosphoserine. Residue K439 forms a Glycyl lysine isopeptide (Lys-Gly) (interchain with G-Cter in SUMO2) linkage. An N6-acetyllysine; alternate modification is found at K445. K445 is modified (N6-succinyllysine; alternate). K445 is covalently cross-linked (Glycyl lysine isopeptide (Lys-Gly) (interchain with G-Cter in SUMO2); alternate). A Glycyl lysine isopeptide (Lys-Gly) (interchain with G-Cter in SUMO1); alternate cross-link involves residue K445. Phosphothreonine occurs at positions 446 and 458. Phosphoserine is present on S459.

This sequence belongs to the intermediate filament family. As to quaternary structure, homomer assembled from elementary dimers. Identified in complexes that contain VIM, EZR, AHNAK, BFSP1, BFSP2, ANK2, PLEC, PRX and spectrin. Interacts with BCAS3. Interacts with LGSN. Interacts with SYNM. Interacts (via rod region) with PLEC (via CH 1 domain). Interacts with PLEC isoform 1C. Interacts with STK33. Interacts with LARP6. Interacts with RAB8B. Interacts with TOR1A; the interaction associates TOR1A with the cytoskeleton. Interacts with TOR1AIP1. Interacts with DIAPH1. Interacts with EPPK1; interaction is dependent of higher-order structure of intermediate filament. Interacts with the non-receptor tyrosine kinase SRMS; the interaction leads to phosphorylation of VIM. Interacts with NOD2. Interacts (via head region) with CORO1C. Interacts with HDGF. Interacts with PRKCE (via phorbol-ester/DAG-type 2 domain). Interacts with BFSP2. Interacts with PPL. Interacts with PKP1 and PKP2. Interacts with SCRIB (via PDZ domains); the interaction protects SCRIB from proteasomal degradation and facilitates SCRIB localization to intermediate filaments, the interaction is reduced by cell contact inhibition. In terms of processing, phosphorylation by PKN1 inhibits the formation of filaments. Filament disassembly during mitosis is promoted by phosphorylation at Ser-55 as well as by nestin. One of the most prominent phosphoproteins in various cells of mesenchymal origin. Phosphorylation is enhanced during cell division, at which time vimentin filaments are significantly reorganized. Phosphorylated at Ser-56 by CDK5 during neutrophil secretion in the cytoplasm. Phosphorylated by STK33. Phosphorylated on tyrosine residues by SRMS. S-nitrosylation is induced by interferon-gamma and oxidatively-modified low-densitity lipoprotein (LDL(ox)) possibly implicating the iNOS-S100A8/9 transnitrosylase complex. Detected in eye lens fiber cells (at protein level). Expressed in retinal lens epithelial cells (at protein level). Expressed in Langerhans cells in the epidermis (at protein level).

It localises to the cytoplasm. The protein resides in the cytoskeleton. It is found in the nucleus matrix. Its subcellular location is the cell membrane. Its function is as follows. Vimentins are class-III intermediate filaments found in various non-epithelial cells, especially mesenchymal cells. Vimentin is attached to the nucleus, endoplasmic reticulum, and mitochondria, either laterally or terminally. Plays a role in cell directional movement, orientation, cell sheet organization and Golgi complex polarization at the cell migration front. Protects SCRIB from proteasomal degradation and facilitates its localization to intermediate filaments in a cell contact-mediated manner. Functionally, involved with LARP6 in the stabilization of type I collagen mRNAs for CO1A1 and CO1A2. This Mus musculus (Mouse) protein is Vimentin.